Here is a 448-residue protein sequence, read N- to C-terminus: Homogentisate 1,2-dioxygenase (448 aa).

Histidine 303 serves as the catalytic Proton acceptor. The Fe cation site is built by histidine 346 and glutamate 352. Residues tyrosine 361 and histidine 382 each coordinate homogentisate. Histidine 382 contacts Fe cation.

This sequence belongs to the homogentisate dioxygenase family. In terms of assembly, hexamer; dimer of trimers. Fe cation serves as cofactor.

The enzyme catalyses homogentisate + O2 = 4-maleylacetoacetate + H(+). Its pathway is amino-acid degradation; L-phenylalanine degradation; acetoacetate and fumarate from L-phenylalanine: step 4/6. Functionally, involved in the catabolism of homogentisate (2,5-dihydroxyphenylacetate or 2,5-OH-PhAc), a central intermediate in the degradation of phenylalanine and tyrosine. Catalyzes the oxidative ring cleavage of the aromatic ring of homogentisate to yield maleylacetoacetate. The polypeptide is Homogentisate 1,2-dioxygenase (Bradyrhizobium diazoefficiens (strain JCM 10833 / BCRC 13528 / IAM 13628 / NBRC 14792 / USDA 110)).